A 311-amino-acid chain; its full sequence is Ribose-5-phosphate isomerase (311 aa).

A compositionally biased stretch (gly residues) spans 22 to 32 (AGGAASGGGGN). The interval 22-67 (AGGAASGGGGNSWDLPGSHVRLPGRAQSGTRGGAGNTSTSCGDSNS) is disordered. At R52 the chain carries Omega-N-methylarginine. The segment covering 57–67 (NTSTSCGDSNS) has biased composition (polar residues). S106 carries the post-translational modification Phosphoserine.

Belongs to the ribose 5-phosphate isomerase family.

The catalysed reaction is aldehydo-D-ribose 5-phosphate = D-ribulose 5-phosphate. Its pathway is carbohydrate degradation; pentose phosphate pathway; D-ribose 5-phosphate from D-ribulose 5-phosphate (non-oxidative stage): step 1/1. Catalyzes the reversible conversion of ribose-5-phosphate to ribulose 5-phosphate and participates in the first step of the non-oxidative branch of the pentose phosphate pathway. In Homo sapiens (Human), this protein is Ribose-5-phosphate isomerase.